Here is a 106-residue protein sequence, read N- to C-terminus: UPF0145 protein TM_0763 (106 aa).

Belongs to the UPF0145 family.

This is UPF0145 protein TM_0763 from Thermotoga maritima (strain ATCC 43589 / DSM 3109 / JCM 10099 / NBRC 100826 / MSB8).